Reading from the N-terminus, the 370-residue chain is UDP-N-acetylglucosamine--N-acetylmuramyl-(pentapeptide) pyrophosphoryl-undecaprenol N-acetylglucosamine transferase (370 aa).

Residues 15–17 (TGG), Asn129, Arg170, Ser199, Ile254, and Gln299 contribute to the UDP-N-acetyl-alpha-D-glucosamine site.

Belongs to the glycosyltransferase 28 family. MurG subfamily.

It is found in the cell inner membrane. The catalysed reaction is di-trans,octa-cis-undecaprenyl diphospho-N-acetyl-alpha-D-muramoyl-L-alanyl-D-glutamyl-meso-2,6-diaminopimeloyl-D-alanyl-D-alanine + UDP-N-acetyl-alpha-D-glucosamine = di-trans,octa-cis-undecaprenyl diphospho-[N-acetyl-alpha-D-glucosaminyl-(1-&gt;4)]-N-acetyl-alpha-D-muramoyl-L-alanyl-D-glutamyl-meso-2,6-diaminopimeloyl-D-alanyl-D-alanine + UDP + H(+). The protein operates within cell wall biogenesis; peptidoglycan biosynthesis. Its function is as follows. Cell wall formation. Catalyzes the transfer of a GlcNAc subunit on undecaprenyl-pyrophosphoryl-MurNAc-pentapeptide (lipid intermediate I) to form undecaprenyl-pyrophosphoryl-MurNAc-(pentapeptide)GlcNAc (lipid intermediate II). In Magnetococcus marinus (strain ATCC BAA-1437 / JCM 17883 / MC-1), this protein is UDP-N-acetylglucosamine--N-acetylmuramyl-(pentapeptide) pyrophosphoryl-undecaprenol N-acetylglucosamine transferase.